The sequence spans 90 residues: Small ribosomal subunit protein uS19 (90 aa).

This sequence belongs to the universal ribosomal protein uS19 family.

In terms of biological role, protein S19 forms a complex with S13 that binds strongly to the 16S ribosomal RNA. This Methylococcus capsulatus (strain ATCC 33009 / NCIMB 11132 / Bath) protein is Small ribosomal subunit protein uS19.